A 942-amino-acid polypeptide reads, in one-letter code: Leucine--tRNA ligase 2 (942 aa).

The short motif at P35 to H45 is the 'HIGH' region element. The short motif at K619–S623 is the 'KMSKS' region element. An ATP-binding site is contributed by K622.

This sequence belongs to the class-I aminoacyl-tRNA synthetase family.

It localises to the cytoplasm. It catalyses the reaction tRNA(Leu) + L-leucine + ATP = L-leucyl-tRNA(Leu) + AMP + diphosphate. The chain is Leucine--tRNA ligase 2 from Sulfolobus acidocaldarius (strain ATCC 33909 / DSM 639 / JCM 8929 / NBRC 15157 / NCIMB 11770).